The chain runs to 254 residues: Probable protein ABIL5 (254 aa).

The interval 1-26 (MEVAEAGVDGVAGRRQQEEASGAAPF) is disordered.

It belongs to the ABI family. As to quaternary structure, binds SCAR.

The protein localises to the cytoplasm. It is found in the cytoskeleton. In terms of biological role, involved in regulation of actin and microtubule organization. Part of a WAVE complex that activates the Arp2/3 complex. This chain is Probable protein ABIL5, found in Oryza sativa subsp. japonica (Rice).